The primary structure comprises 948 residues: UvrABC system protein A (948 aa).

Residue 42–49 (GLSGSGKS) coordinates ATP. The segment at 262–289 (CPVCSYSLPELEPRLFSFNNPMGSCPTC) adopts a C4-type zinc-finger fold. 2 ABC transporter domains span residues 319-596 (WDKR…ENSV) and 616-945 (VNPG…KYLK). 649–656 (GVSGSGKS) is an ATP binding site. Residues 748-774 (CEACQGDGVIKVEMHFLPDVYVPCEVC) form a C4-type zinc finger.

The protein belongs to the ABC transporter superfamily. UvrA family. In terms of assembly, forms a heterotetramer with UvrB during the search for lesions.

It is found in the cytoplasm. The UvrABC repair system catalyzes the recognition and processing of DNA lesions. UvrA is an ATPase and a DNA-binding protein. A damage recognition complex composed of 2 UvrA and 2 UvrB subunits scans DNA for abnormalities. When the presence of a lesion has been verified by UvrB, the UvrA molecules dissociate. In Neisseria meningitidis serogroup A / serotype 4A (strain DSM 15465 / Z2491), this protein is UvrABC system protein A.